The primary structure comprises 361 residues: C3a anaphylatoxin chemotactic receptor (361 aa).

At 1–64 (MQQETQAPPL…FASSEVRVIS (64 aa)) the chain is on the extracellular side. 2 N-linked (GlcNAc...) asparagine glycosylation sites follow: asparagine 36 and asparagine 50. A helical membrane pass occupies residues 65–85 (LVVYCLTFLLGVPGNSFVIFI). Over 86–96 (AGMKMKRTVNT) the chain is Cytoplasmic. A helical membrane pass occupies residues 97 to 117 (IWFLNLATADLLCCLSVPLTV). The Extracellular portion of the chain corresponds to 118–134 (AEILLDHHWPYGYAMCK). A disulfide bridge links cysteine 133 with cysteine 210. Residues 135-155 (ILPSVIVISMFASVFTLNIIS) traverse the membrane as a helical segment. Over 156–177 (LDRFTQVITPVWAQNHRSLLLA) the chain is Cytoplasmic. The helical transmembrane segment at 178-198 (RLSCVAVWILALLLSLPFMIL) threads the bilayer. The Extracellular segment spans residues 199–224 (RRTYEEFNMTVCTFDDDDFTTYGALS). A helical membrane pass occupies residues 225–245 (IVRFVFGFLIPLMSIVTCYGI). At 246–262 (IARKLGSRHFRSGRAFR) the chain is on the cytoplasmic side. A helical transmembrane segment spans residues 263–283 (IMLAVIVAFFLCWMPYHVLDL). Over 284 to 301 (IRSYGGESSSMVALKVDP) the chain is Extracellular. The chain crosses the membrane as a helical span at residues 302-322 (LAISLAYVNSCLNPVLYVFMG). Over 323–361 (QDFKNKVQLSLRRVFERAFSEEGTQISRSTQSQQVHSVL) the chain is Cytoplasmic.

It belongs to the G-protein coupled receptor 1 family.

It is found in the cell membrane. Functionally, receptor for the chemotactic and inflammatory peptide anaphylatoxin C3a. This receptor stimulates chemotaxis, granule enzyme release and superoxide anion production. The protein is C3a anaphylatoxin chemotactic receptor (c3ar1) of Danio rerio (Zebrafish).